We begin with the raw amino-acid sequence, 174 residues long: Gamma-crystallin E (174 aa).

Beta/gamma crystallin 'Greek key' domains lie at 2-40 (GKIT…RVDS) and 41-83 (GCWM…RLIP). A connecting peptide region spans residues 84–87 (HSSS). 2 consecutive Beta/gamma crystallin 'Greek key' domains span residues 88 to 128 (HRIR…HVME) and 129 to 171 (GYWV…RRIM).

This sequence belongs to the beta/gamma-crystallin family. Detected in the superior olivary complex and fibers of the ventral aoustic stria of the auditory hindbrain.

Its function is as follows. Crystallins are the dominant structural components of the vertebrate eye lens. This chain is Gamma-crystallin E (Cryge), found in Rattus norvegicus (Rat).